The sequence spans 482 residues: Exodeoxyribonuclease 7 large subunit (482 aa).

The tract at residues 457–482 (TLDTGGAPAKPASKPKQKPPEQGSLF) is disordered.

It belongs to the XseA family. In terms of assembly, heterooligomer composed of large and small subunits.

The protein resides in the cytoplasm. It catalyses the reaction Exonucleolytic cleavage in either 5'- to 3'- or 3'- to 5'-direction to yield nucleoside 5'-phosphates.. Functionally, bidirectionally degrades single-stranded DNA into large acid-insoluble oligonucleotides, which are then degraded further into small acid-soluble oligonucleotides. The chain is Exodeoxyribonuclease 7 large subunit from Ruegeria pomeroyi (strain ATCC 700808 / DSM 15171 / DSS-3) (Silicibacter pomeroyi).